The sequence spans 660 residues: Junctophilin-1 (660 aa).

The Cytoplasmic segment spans residues 1 to 638 (MTGGRFDFDD…EKEANSGPNS (638 aa)). MORN repeat units lie at residues 14–36 (YCGG…KGQG), 38–59 (YSGS…SGNT), 60–82 (YQGY…KWMY), 106–128 (YEGT…DGGT), and 129–151 (YQGQ…PYGM). Phosphoserine is present on residues serine 157, serine 216, and serine 220. Residues 228 to 247 (SKSSISSKRSSVRSDAAMSR) are disordered. 2 MORN repeats span residues 281–303 (YMGE…NGMK) and 304–326 (YEGE…DGSK). Basic and acidic residues predominate over residues 437–454 (NPEEKVLEKPPSPKESPH). Residues 437-631 (NPEEKVLEKP…NDTCPSLEKE (195 aa)) form a disordered region. The residue at position 452 (serine 452) is a Phosphoserine. At threonine 461 the chain carries Phosphothreonine. A phosphoserine mark is found at serine 465, serine 469, and serine 475. Residues 466-477 (PESSPKQSHSPQ) show a composition bias toward low complexity. Basic and acidic residues-rich tracts occupy residues 562-571 (PPEDREDDRG) and 598-612 (VAKE…KKSE). A helical; Anchor for type IV membrane protein transmembrane segment spans residues 639–659 (IMIVLVMLLNIGLAILFVHFL).

This sequence belongs to the junctophilin family. As to expression, specifically expressed in skeletal muscle. Weakly expressed in embryos and neonates. Abundant in young adult muscles.

The protein resides in the cell membrane. It is found in the endoplasmic reticulum membrane. It localises to the sarcoplasmic reticulum membrane. Junctophilins contribute to the formation of junctional membrane complexes (JMCs) which link the plasma membrane with the endoplasmic or sarcoplasmic reticulum in excitable cells. Provides a structural foundation for functional cross-talk between the cell surface and intracellular calcium release channels. JPH1 contributes to the construction of the skeletal muscle triad by linking the t-tubule (transverse-tubule) and SR (sarcoplasmic reticulum) membranes. The sequence is that of Junctophilin-1 (Jph1) from Mus musculus (Mouse).